Reading from the N-terminus, the 264-residue chain is uncharacterized protein (264 aa).

A run of 6 helical transmembrane segments spans residues 23–43, 59–79, 91–111, 150–170, 190–210, and 233–253; these read LIFL…TALI, FDTF…YYFL, LVLS…FYAL, FSEL…VGLL, AGIY…LNVW, and WIWS…LFVI.

It localises to the cell membrane. This is an uncharacterized protein from Mycoplasma genitalium (strain ATCC 33530 / DSM 19775 / NCTC 10195 / G37) (Mycoplasmoides genitalium).